A 574-amino-acid chain; its full sequence is Isocitrate dehydrogenase kinase/phosphatase (574 aa).

ATP contacts are provided by residues 315-321 and lysine 336; that span reads APGIRGM. Aspartate 371 is an active-site residue.

It belongs to the AceK family.

The protein localises to the cytoplasm. The enzyme catalyses L-seryl-[isocitrate dehydrogenase] + ATP = O-phospho-L-seryl-[isocitrate dehydrogenase] + ADP + H(+). Its function is as follows. Bifunctional enzyme which can phosphorylate or dephosphorylate isocitrate dehydrogenase (IDH) on a specific serine residue. This is a regulatory mechanism which enables bacteria to bypass the Krebs cycle via the glyoxylate shunt in response to the source of carbon. When bacteria are grown on glucose, IDH is fully active and unphosphorylated, but when grown on acetate or ethanol, the activity of IDH declines drastically concomitant with its phosphorylation. The chain is Isocitrate dehydrogenase kinase/phosphatase from Escherichia coli O81 (strain ED1a).